Consider the following 83-residue polypeptide: Mu-theraphotoxin-Hhn2j 2 (83 aa).

The signal sequence occupies residues 1-21 (MKASMFLALAGLVLLFVVGYA). A propeptide spanning residues 22–48 (SESEEKEFPIELLSKIFAVDVFKGEDR) is cleaved from the precursor. Disulfide bonds link cysteine 50-cysteine 65, cysteine 57-cysteine 70, and cysteine 64-cysteine 77. At leucine 81 the chain carries Leucine amide.

It belongs to the neurotoxin 10 (Hwtx-1) family. 15 (Hntx-3) subfamily. In terms of assembly, monomer. Expressed by the venom gland.

The protein localises to the secreted. Its function is as follows. Lethal neurotoxin. Selectively blocks tetrodotoxin-sensitive voltage-gated sodium channels (Nav). Does not affect tetrodotoxin-resistant voltage-gated sodium channels or calcium channels. The protein is Mu-theraphotoxin-Hhn2j 2 of Cyriopagopus hainanus (Chinese bird spider).